Consider the following 234-residue polypeptide: MVKSWLRMSKKMEAGTLLMLLMSNILLWENVASVPRHASGAGRGEMSLHGLLDHAIILAHNVTELIAEMNSVFLEDVLYKPGRWFPERDLTACHRSPFTIAVSKEGTQQRLGVFLVKEMIGMLETWTFSLYHIANEMSHMEEPPDEIISRAKNIEEKIKELMDVLKGILNKIQPGSPQNERFPMWNELAYLRSPDEERRHFAFTNLFQCLLQDSRKFDSKVRLLKCRLIYNRDC.

A signal peptide spans methionine 1 to serine 33. Asparagine 61 carries N-linked (GlcNAc...) asparagine glycosylation. 2 disulfides stabilise this stretch: cysteine 93–cysteine 209 and cysteine 226–cysteine 234.

Belongs to the somatotropin/prolactin family.

The protein localises to the secreted. This is Prolactin-6A1 (Prl6a1) from Rattus norvegicus (Rat).